The sequence spans 482 residues: MFS-type transporter cnsL (482 aa).

A helical transmembrane segment spans residues 73–93 (LFVCATLSGLDKTAISAAAVY). N-linked (GlcNAc...) asparagine glycosylation is present at Asn-100. A run of 9 helical transmembrane segments spans residues 108 to 128 (WIGS…AYCL), 131 to 151 (VPAV…EMSV), 170 to 190 (IILN…VGYY), 199 to 219 (IIFL…YFVL), 304 to 324 (LLAM…SYLA), 333 to 353 (AIVT…YALP), 361 to 381 (LVGL…VSVY), 392 to 412 (ITLY…GPQT), and 426 to 446 (VAMI…GVVC).

The protein belongs to the major facilitator superfamily. Allantoate permease family.

The protein resides in the cell membrane. In terms of biological role, MFS-type transporter; part of the gene cluster that mediates the biosynthesis of communesins, a prominent class of indole alkaloids with great potential as pharmaceuticals. With the MFS transporter cnsO, is most likely responsible for cummunesins secretion and thereby may contribute to intrinsic resistance. The chain is MFS-type transporter cnsL from Penicillium expansum (Blue mold rot fungus).